A 130-amino-acid chain; its full sequence is MIGNWNYGTGRRKSAVARVFIKSGKGDIIVNGKPVADYFARETSLMMVRQPLELTNHGATFDIKVNVVGGGETGQAGAVRHGITRALIDYDATLKPTLSKAGLVTRDAREVERKKVGLHKARRRKQFSKR.

Belongs to the universal ribosomal protein uS9 family.

This Ralstonia nicotianae (strain ATCC BAA-1114 / GMI1000) (Ralstonia solanacearum) protein is Small ribosomal subunit protein uS9.